Consider the following 93-residue polypeptide: Progonadoliberin-2 (93 aa).

The N-terminal stretch at 1–24 is a signal peptide; it reads MACQRHLLFLLLVLFAVSTQLSHG. Gln-25 carries the post-translational modification Pyrrolidone carboxylic acid. A Glycine amide modification is found at Gly-34.

This sequence belongs to the GnRH family. In terms of tissue distribution, midbrain and hindbrain.

It is found in the secreted. Stimulates the secretion of gonadotropins. This chain is Progonadoliberin-2 (gnrh2), found in Aquarana catesbeiana (American bullfrog).